Here is a 154-residue protein sequence, read N- to C-terminus: Probable ubiquitin-conjugating enzyme E2 31 (154 aa).

The 146-residue stretch at 8–153 (KAAQRIAMEY…AREFTARHAN (146 aa)) folds into the UBC core domain. The active-site Glycyl thioester intermediate is the C91.

The protein belongs to the ubiquitin-conjugating enzyme family.

The enzyme catalyses S-ubiquitinyl-[E1 ubiquitin-activating enzyme]-L-cysteine + [E2 ubiquitin-conjugating enzyme]-L-cysteine = [E1 ubiquitin-activating enzyme]-L-cysteine + S-ubiquitinyl-[E2 ubiquitin-conjugating enzyme]-L-cysteine.. It participates in protein modification; protein ubiquitination. Its function is as follows. Accepts the ubiquitin from the E1 complex and catalyzes its covalent attachment to other proteins. This chain is Probable ubiquitin-conjugating enzyme E2 31 (UBC31), found in Arabidopsis thaliana (Mouse-ear cress).